The sequence spans 171 residues: Anthrone oxygenase dmxR16 (171 aa).

Transmembrane regions (helical) follow at residues 21-41, 67-87, and 96-116; these read VIAA…ISMI, GHII…FSAL, and YALA…FMTP. N-linked (GlcNAc...) asparagine glycans are attached at residues Asn118 and Asn129. Residues 145–165 form a helical membrane-spanning segment; the sequence is WLHATRSMFPLIGAILGFTGI.

It belongs to the anthrone oxygenase family.

The protein localises to the membrane. It carries out the reaction emodin anthrone + O2 = emodin + H2O + H(+). The protein operates within secondary metabolite biosynthesis. Functionally, anthrone oxygenase; part of the gene cluster that mediates the biosynthesis of the dimeric xanthones cryptosporioptides. The pathway begins with the synthesis of atrochrysone thioester by the polyketide synthase dmx-nrPKS. The atrochrysone carboxyl ACP thioesterase dmxR1 then breaks the thioester bond and releases the atrochrysone carboxylic acid from dmx-nrPKS. Atrochrysone carboxylic acid is decarboxylated by the decarboxylase dmxR15, and oxidized by the anthrone oxygenase dmxR16 to yield emodin. Emodin is then reduced to emodin hydroquinone by the oxidoreductase dmxR7. A-ring reduction by the short chain dehydrogenase dmxR18, dehydration by the scytalone dehydratase-like protein dmxR17 and probable spontaneous re-oxidation, results in overall deoxygenation to chrysophanol. Baeyer-Villiger oxidation by the Baeyer-Villiger monooxygenase (BVMO) dmxR6 then yields monodictylactone in equilibrium with monodictyphenone. In the case of the cryptosporioptides biosynthesis, monodictylactone is reduced at C-12 to an alcohol (by the short chain dehydrogenases dmxR12 or dmxR8) and hydroxylated at C-5 by dmxR9, yielding the electron-rich aromatic which could eliminate H(2)O to form the ortho-quinonemethide, followed by tautomerisation to paraquinone and complete the formal reduction to produce the 10-methylgroup. Conjugate addition of C-4a-OH to the resulting paraquinone by the monooxygenase dmxR10 then gives cyclohexadienone, which is then reduced at C-5 by the short chain dehydrogenase dmxR3 to give the dihydroxanthone. The 6,7-epoxide in the cryptosporioptides could be introduced by the cytochrome P450 monooxygenase dmxL3. The highly reducing PKS dmxL2 manufactures butyrate, which is further carboxylated by dmxL1 to form ethylmalonate. It is not yet clear whether the carboxylation occurs while the butyrate is attached to the ACP of dmxL2, but this unusual fungal metabolite could then be esterified to O-5 by the O-acetyltransferase dmxR13. Finally, dimerization performed by dmxR5 gives the observed dimers cryptosporioptides A, B and C as the final products of the pathway. This is Anthrone oxygenase dmxR16 from Cryptosporiopsis sp. (strain 8999).